Consider the following 284-residue polypeptide: L-ribulose-5-phosphate 3-epimerase UlaE (284 aa).

This sequence belongs to the L-ribulose-5-phosphate 3-epimerase family.

It catalyses the reaction L-ribulose 5-phosphate = L-xylulose 5-phosphate. Its pathway is cofactor degradation; L-ascorbate degradation; D-xylulose 5-phosphate from L-ascorbate: step 3/4. Functionally, catalyzes the isomerization of L-xylulose-5-phosphate to L-ribulose-5-phosphate. Is involved in the anaerobic L-ascorbate utilization. In Salmonella dublin (strain CT_02021853), this protein is L-ribulose-5-phosphate 3-epimerase UlaE.